A 527-amino-acid chain; its full sequence is Berberine bridge enzyme-like 5 (527 aa).

The first 19 residues, 1–19, serve as a signal peptide directing secretion; it reads MKALFSVLCLVLLVSILRA. Cysteine 32 and cysteine 95 form a disulfide bridge. Asparagine 35 and asparagine 52 each carry an N-linked (GlcNAc...) asparagine glycan. One can recognise an FAD-binding PCMH-type domain in the interval 73-247; it reads NYQKLVAIVA…LSWKINLVEV (175 aa). Positions 110–172 form a cross-link, 6-(S-cysteinyl)-8alpha-(pros-histidyl)-FAD (His-Cys); sequence HDYEGLSYTS…QTLAFPAGVC (63 aa). N-linked (GlcNAc...) asparagine glycosylation is present at asparagine 341.

Belongs to the oxygen-dependent FAD-linked oxidoreductase family. It depends on FAD as a cofactor. The FAD cofactor is bound via a bicovalent 6-S-cysteinyl, 8alpha-N1-histidyl FAD linkage.

Its subcellular location is the secreted. The protein resides in the cell wall. Its function is as follows. Probable flavin-dependent oxidoreductase. The polypeptide is Berberine bridge enzyme-like 5 (Arabidopsis thaliana (Mouse-ear cress)).